The chain runs to 691 residues: Elongation factor G (691 aa).

One can recognise a tr-type G domain in the interval 10-284 (KRLRNIGIAA…AVVDYLPSPL (275 aa)). GTP contacts are provided by residues 19–26 (AHIDAGKT), 83–87 (DTPGH), and 137–140 (NKMD).

The protein belongs to the TRAFAC class translation factor GTPase superfamily. Classic translation factor GTPase family. EF-G/EF-2 subfamily.

It is found in the cytoplasm. Functionally, catalyzes the GTP-dependent ribosomal translocation step during translation elongation. During this step, the ribosome changes from the pre-translocational (PRE) to the post-translocational (POST) state as the newly formed A-site-bound peptidyl-tRNA and P-site-bound deacylated tRNA move to the P and E sites, respectively. Catalyzes the coordinated movement of the two tRNA molecules, the mRNA and conformational changes in the ribosome. The sequence is that of Elongation factor G (fusA) from Thermus thermophilus (strain ATCC 27634 / DSM 579 / HB8).